A 364-amino-acid chain; its full sequence is UDP-N-acetylglucosamine--N-acetylmuramyl-(pentapeptide) pyrophosphoryl-undecaprenol N-acetylglucosamine transferase (364 aa).

UDP-N-acetyl-alpha-D-glucosamine is bound by residues 10 to 12 (TGG), asparagine 124, arginine 165, serine 193, isoleucine 248, and glutamine 293.

This sequence belongs to the glycosyltransferase 28 family. MurG subfamily.

It localises to the cell inner membrane. The enzyme catalyses di-trans,octa-cis-undecaprenyl diphospho-N-acetyl-alpha-D-muramoyl-L-alanyl-D-glutamyl-meso-2,6-diaminopimeloyl-D-alanyl-D-alanine + UDP-N-acetyl-alpha-D-glucosamine = di-trans,octa-cis-undecaprenyl diphospho-[N-acetyl-alpha-D-glucosaminyl-(1-&gt;4)]-N-acetyl-alpha-D-muramoyl-L-alanyl-D-glutamyl-meso-2,6-diaminopimeloyl-D-alanyl-D-alanine + UDP + H(+). It participates in cell wall biogenesis; peptidoglycan biosynthesis. Cell wall formation. Catalyzes the transfer of a GlcNAc subunit on undecaprenyl-pyrophosphoryl-MurNAc-pentapeptide (lipid intermediate I) to form undecaprenyl-pyrophosphoryl-MurNAc-(pentapeptide)GlcNAc (lipid intermediate II). The chain is UDP-N-acetylglucosamine--N-acetylmuramyl-(pentapeptide) pyrophosphoryl-undecaprenol N-acetylglucosamine transferase from Geobacter metallireducens (strain ATCC 53774 / DSM 7210 / GS-15).